Reading from the N-terminus, the 469-residue chain is MATPWGAVFFLLMIACAGSTVFYREQQTWFEGVFLSSMCPANVSASTFYGIMFDAGSTGTRIHVYTFVQKAAGQLPFLEGEIFDSVKPGLSAFADQPKQGAQTVHALLEVAKDSIPRSHWKRTPVVLKATAGLRLLPEQKAQALLLEVEEIFKMSPFLVPDDSVSIMDGSYEGILAWVTVNFLTGQLHGHSQETMGTLDLGGASTQITFLPQFSKTLEQTPRDYLTSFEMFNSTFKLYTHSYLGFGLKAARLATLGALETEGTDGHTFRSACLPRWLEAEWIFGGVKYQYGGNQEGEMGFEPCYAEVLRVVQGKLHQPEEIRGSSFYAFSYYYDRAADTHLIDYEKGGVLKVEDFERKAREVCDNLESFTSGSPFLCMDLSYITALLKDGFGFADGTLLQLTKKVNNIETGWPGGHLSPAAVSGHLQLRLSVPLETCTSELLFTGRRGLGHFLQLRWRKPGLKPIDWLY.

An N-terminal signal peptide occupies residues 1-24 (MATPWGAVFFLLMIACAGSTVFYR). Catalysis depends on Glu-172, which acts as the Proton acceptor. Residue Asn-232 is glycosylated (N-linked (GlcNAc...) asparagine). Disulfide bonds link Cys-272–Cys-303 and Cys-363–Cys-377.

The protein belongs to the GDA1/CD39 NTPase family. Monomer; active form. Homodimer; disulfide-linked. Homodimers are enzymatically inactive. Requires Ca(2+) as cofactor. The cofactor is Mg(2+). N-glycosylated; high-mannose type. In terms of tissue distribution, expressed in fetal cells and most adult tissues.

It localises to the endoplasmic reticulum. It is found in the secreted. It carries out the reaction a ribonucleoside 5'-diphosphate + H2O = a ribonucleoside 5'-phosphate + phosphate + H(+). The catalysed reaction is GDP + H2O = GMP + phosphate + H(+). It catalyses the reaction UDP + H2O = UMP + phosphate + H(+). The enzyme catalyses IDP + H2O = IMP + phosphate + H(+). It carries out the reaction CDP + H2O = CMP + phosphate + H(+). The catalysed reaction is ADP + H2O = AMP + phosphate + H(+). It functions in the pathway protein modification; protein glycosylation. Hydrolyzes nucleoside diphosphates with a preference for GDP, IDP and UDP compared to ADP and CDP. In the lumen of the endoplasmic reticulum, hydrolyzes UDP that acts as an end-product feedback inhibitor of the UDP-Glc:glycoprotein glucosyltransferases. UMP can be transported back by an UDP-sugar antiporter to the cytosol where it is consumed to regenerate UDP-glucose. Therefore, it positively regulates protein reglucosylation by clearing UDP from the ER lumen and by promoting the regeneration of UDP-glucose. Protein reglucosylation is essential to proper glycoprotein folding and quality control in the ER. This Mesocricetus auratus (Golden hamster) protein is Ectonucleoside triphosphate diphosphohydrolase 5 (ENTPD5).